Consider the following 201-residue polypeptide: ATP-dependent Clp protease proteolytic subunit 1 (201 aa).

Ser102 functions as the Nucleophile in the catalytic mechanism. His127 is an active-site residue.

This sequence belongs to the peptidase S14 family. Fourteen ClpP subunits assemble into 2 heptameric rings which stack back to back to give a disk-like structure with a central cavity, resembling the structure of eukaryotic proteasomes.

It is found in the cytoplasm. The catalysed reaction is Hydrolysis of proteins to small peptides in the presence of ATP and magnesium. alpha-casein is the usual test substrate. In the absence of ATP, only oligopeptides shorter than five residues are hydrolyzed (such as succinyl-Leu-Tyr-|-NHMec, and Leu-Tyr-Leu-|-Tyr-Trp, in which cleavage of the -Tyr-|-Leu- and -Tyr-|-Trp bonds also occurs).. In terms of biological role, cleaves peptides in various proteins in a process that requires ATP hydrolysis. Has a chymotrypsin-like activity. Plays a major role in the degradation of misfolded proteins. This chain is ATP-dependent Clp protease proteolytic subunit 1, found in Mesorhizobium japonicum (strain LMG 29417 / CECT 9101 / MAFF 303099) (Mesorhizobium loti (strain MAFF 303099)).